A 486-amino-acid polypeptide reads, in one-letter code: 2-succinylbenzoate--CoA ligase (486 aa).

Belongs to the ATP-dependent AMP-binding enzyme family. MenE subfamily.

The enzyme catalyses 2-succinylbenzoate + ATP + CoA = 2-succinylbenzoyl-CoA + AMP + diphosphate. It functions in the pathway quinol/quinone metabolism; 1,4-dihydroxy-2-naphthoate biosynthesis; 1,4-dihydroxy-2-naphthoate from chorismate: step 5/7. Its pathway is quinol/quinone metabolism; menaquinone biosynthesis. In terms of biological role, converts 2-succinylbenzoate (OSB) to 2-succinylbenzoyl-CoA (OSB-CoA). The protein is 2-succinylbenzoate--CoA ligase of Bacillus pumilus (strain SAFR-032).